Here is a 329-residue protein sequence, read N- to C-terminus: Octaprenyl diphosphate synthase (329 aa).

The isopentenyl diphosphate site is built by Lys51, Arg54, and His83. Asp90 and Asp94 together coordinate Mg(2+). An all-trans-polyprenyl diphosphate is bound at residue Arg99. Residue Arg100 participates in isopentenyl diphosphate binding. An all-trans-polyprenyl diphosphate-binding residues include Lys176, Thr177, and Gln214.

It belongs to the FPP/GGPP synthase family. It depends on Mg(2+) as a cofactor.

It catalyses the reaction 5 isopentenyl diphosphate + (2E,6E)-farnesyl diphosphate = all-trans-octaprenyl diphosphate + 5 diphosphate. In terms of biological role, supplies octaprenyl diphosphate, the precursor for the side chain of the isoprenoid quinones ubiquinone and menaquinone. This chain is Octaprenyl diphosphate synthase (ispB), found in Haemophilus influenzae (strain ATCC 51907 / DSM 11121 / KW20 / Rd).